The following is a 69-amino-acid chain: UPF0291 protein CD630_10710 (69 aa).

The protein belongs to the UPF0291 family.

It localises to the cytoplasm. The polypeptide is UPF0291 protein CD630_10710 (Clostridioides difficile (strain 630) (Peptoclostridium difficile)).